The primary structure comprises 397 residues: MNCISDFFTYETTKSVVVKSWTIGIINRVVQLLIISYFVGWVFLHEKAYQVRDTAIESSVVTKVKGSGLYANRVMDVSDYVTPPQGTSVFVIITKMIVTENQMQGFCPESEEKYRCVSDSQCGPERLPGGGILTGRCVNYSSVLRTCEIQGWCPTEVDTVETPIMMEAENFTIFIKNSIRFPLFNFEKGNLLPNLTARDMKTCRFHPDKDPFCPILRVGDVVKFAGQDFAKLARTGGVLGIKIGWVCDLDKAWDQCIPKYSFTRLDSVSEKSSVSPGYNFRFAKYYKMENGSEYRTLLKAFGIRFDVLVYGNAGKFNIIPTIISSVAAFTSVGVGTVLCDIILLNFLKGADQYKAKKFEEVNETTLKIAALTNPVYPSDQTTAEKQSTDSGAFSIGH.

At 1-20 (MNCISDFFTYETTKSVVVKS) the chain is on the cytoplasmic side. Residues 21–43 (WTIGIINRVVQLLIISYFVGWVF) traverse the membrane as a helical segment. Over 44 to 322 (LHEKAYQVRD…AGKFNIIPTI (279 aa)) the chain is Extracellular. Residues K63 and K65 each contribute to the ATP site. Intrachain disulfides connect C107-C153, C116-C137, and C122-C147. E111 is a binding site for Mg(2+). N139 carries an N-linked (GlcNAc...) asparagine glycan. D158 is a binding site for Mg(2+). Ca(2+) is bound at residue D158. N170 is a glycosylation site (N-linked (GlcNAc...) asparagine). T172 is an ATP binding site. N194 carries an N-linked (GlcNAc...) asparagine glycan. Intrachain disulfides connect C203/C213 and C247/C256. Residues S275, N279, and R281 each coordinate ATP. N290 carries an N-linked (GlcNAc...) asparagine glycan. K299 contributes to the ATP binding site. Residues 323 to 341 (ISSVAAFTSVGVGTVLCDI) form a helical membrane-spanning segment. Residues 342–397 (ILLNFLKGADQYKAKKFEEVNETTLKIAALTNPVYPSDQTTAEKQSTDSGAFSIGH) lie on the Cytoplasmic side of the membrane. Positions 378–391 (SDQTTAEKQSTDSG) are enriched in polar residues. Residues 378 to 397 (SDQTTAEKQSTDSGAFSIGH) are disordered.

It belongs to the P2X receptor family. In terms of assembly, homotrimer. Forms heterotrimer with P2RX2. Heterotrimeric P2RX2/3 has a ligand dose-response profile that is distinct from either homotrimeric P2RX2 or P2RX3.

Its subcellular location is the cell membrane. The enzyme catalyses Ca(2+)(in) = Ca(2+)(out). It catalyses the reaction Na(+)(in) = Na(+)(out). Has high sensitivity to ATP. Fast activation by external ATP. Exhibits rapid desensitization. Sensitives to the ATP agonist:alpha/beta-methylene-ATP. Subject to allosteric inhibition by AF-219. Mg(2+) and Ca(2+) slow deactivation of P2RX3. Its function is as follows. Extracellular ATP-activated non-selective cation channel. Plays particularly important role in sensory neurons where its activation is critical for gustatory, nociceptive responses, visceral reflexes and sensory hypersensitization. This Homo sapiens (Human) protein is P2X purinoceptor 3 (P2RX3).